The sequence spans 225 residues: MNSIEFPLLDRTTPISVISTTSNDLSNWSRLSSLWPLLYGTSCCFIEFASLIGSRFDFDRYGLVPRSSPRQADLILTAGTVTMKMAPSLVRLYEQMPEQKYVIAMGACTITGGMFSTDSYSTVRGVDKLIPVDVYLPGCPPKPEAIIDAITKLRKKISREIYEDRIRSQQGNRCFTTNHKFHIGRTTNTGNYDQGLLYQPPSTSKIAPEAFFKYKKSVSSPELVN.

[4Fe-4S] cluster contacts are provided by cysteine 43, cysteine 44, cysteine 108, and cysteine 139.

The protein belongs to the complex I 20 kDa subunit family. In terms of assembly, NDH is composed of at least 16 different subunits, 5 of which are encoded in the nucleus. The cofactor is [4Fe-4S] cluster.

It localises to the plastid. The protein localises to the chloroplast thylakoid membrane. The enzyme catalyses a plastoquinone + NADH + (n+1) H(+)(in) = a plastoquinol + NAD(+) + n H(+)(out). It carries out the reaction a plastoquinone + NADPH + (n+1) H(+)(in) = a plastoquinol + NADP(+) + n H(+)(out). NDH shuttles electrons from NAD(P)H:plastoquinone, via FMN and iron-sulfur (Fe-S) centers, to quinones in the photosynthetic chain and possibly in a chloroplast respiratory chain. The immediate electron acceptor for the enzyme in this species is believed to be plastoquinone. Couples the redox reaction to proton translocation, and thus conserves the redox energy in a proton gradient. The protein is NAD(P)H-quinone oxidoreductase subunit K, chloroplastic of Populus trichocarpa (Western balsam poplar).